The following is a 364-amino-acid chain: Growth hormone secretagogue receptor type 1 (364 aa).

Residues 1-40 lie on the Extracellular side of the membrane; the sequence is MWNATPSEEPEPNVTLDLDWDASPGNDSLPDELLPLFPAP. N13 and N26 each carry an N-linked (GlcNAc...) asparagine glycan. Residues 41-66 form a helical membrane-spanning segment; it reads LLAGVTATCVALFVVGISGNLLTMLV. Topologically, residues 67-72 are cytoplasmic; it reads VSRFRE. A helical membrane pass occupies residues 73–96; sequence LRTTTNLYLSSMAFSDLLIFLCMP. Residues 97–117 lie on the Extracellular side of the membrane; the sequence is LDLVRLWQYRPWNFGDLLCKL. C115 and C197 are disulfide-bonded. A helical membrane pass occupies residues 118–139; the sequence is FQFVSESCTYATVLTITALSVE. Over 140–162 the chain is Cytoplasmic; sequence RYFAICFPLRAKVVVTKGRVKLV. The chain crosses the membrane as a helical span at residues 163 to 183; that stretch reads ILVIWAVAFCSAGPIFVLVGV. Over 184-211 the chain is Extracellular; sequence EHENGTDPRDTNECRATEFAVRSGLLTV. The N-linked (GlcNAc...) asparagine glycan is linked to N187. A helical transmembrane segment spans residues 212-235; it reads MVWVSSVFFFLPVFCLTVLYSLIG. The Cytoplasmic portion of the chain corresponds to 236-263; sequence RKLWRRRGDAAVGASLRDQNHKQTVKML. The helical transmembrane segment at 264–285 threads the bilayer; that stretch reads AVVVFAFILCWLPFHVGRYLFS. Residues 286-302 lie on the Extracellular side of the membrane; the sequence is KSFEPGSLEIAQISQYC. The chain crosses the membrane as a helical span at residues 303-326; that stretch reads NLVSFVLFYLSAAINPILYNIMSK. At 327-364 the chain is on the cytoplasmic side; that stretch reads KYRVAVFKLLGFESFSQRKLSTLKDESSRAWTKSSINT.

This sequence belongs to the G-protein coupled receptor 1 family.

The protein localises to the cell membrane. Functionally, receptor for ghrelin, coupled to G-alpha-11 proteins. Stimulates growth hormone secretion. Also binds other growth hormone releasing peptides (GHRP) (e.g. Met-enkephalin and GHRP-6) as well as non-peptide, low molecular weight secretagogues (e.g. L-692,429, MK-0677, adenosine). In Rattus norvegicus (Rat), this protein is Growth hormone secretagogue receptor type 1 (Ghsr).